The primary structure comprises 688 residues: Glycine--tRNA ligase beta subunit (688 aa).

This sequence belongs to the class-II aminoacyl-tRNA synthetase family. In terms of assembly, tetramer of two alpha and two beta subunits.

It is found in the cytoplasm. The catalysed reaction is tRNA(Gly) + glycine + ATP = glycyl-tRNA(Gly) + AMP + diphosphate. The protein is Glycine--tRNA ligase beta subunit of Psychromonas ingrahamii (strain DSM 17664 / CCUG 51855 / 37).